The sequence spans 609 residues: Elongation factor 4 (609 aa).

In terms of domain architecture, tr-type G spans 5-187 (SKIRNFSIIA…AIVAKIPPPE (183 aa)). GTP contacts are provided by residues 17 to 22 (DHGKST) and 134 to 137 (NKID).

Belongs to the TRAFAC class translation factor GTPase superfamily. Classic translation factor GTPase family. LepA subfamily.

The protein localises to the cell inner membrane. The catalysed reaction is GTP + H2O = GDP + phosphate + H(+). In terms of biological role, required for accurate and efficient protein synthesis under certain stress conditions. May act as a fidelity factor of the translation reaction, by catalyzing a one-codon backward translocation of tRNAs on improperly translocated ribosomes. Back-translocation proceeds from a post-translocation (POST) complex to a pre-translocation (PRE) complex, thus giving elongation factor G a second chance to translocate the tRNAs correctly. Binds to ribosomes in a GTP-dependent manner. The polypeptide is Elongation factor 4 (Erythrobacter litoralis (strain HTCC2594)).